The primary structure comprises 253 residues: Small ribosomal subunit protein uS2 (253 aa).

It belongs to the universal ribosomal protein uS2 family.

The polypeptide is Small ribosomal subunit protein uS2 (Hahella chejuensis (strain KCTC 2396)).